The primary structure comprises 233 residues: Pyridoxal 5'-phosphate synthase subunit PdxT (233 aa).

L-glutamine is bound at residue 61–63; it reads GES. Residue C93 is the Nucleophile of the active site. L-glutamine-binding positions include R127 and 163–164; that span reads IR. Residues H212 and E214 each act as charge relay system in the active site.

Belongs to the glutaminase PdxT/SNO family. In terms of assembly, in the presence of PdxS, forms a dodecamer of heterodimers. Only shows activity in the heterodimer.

It catalyses the reaction aldehydo-D-ribose 5-phosphate + D-glyceraldehyde 3-phosphate + L-glutamine = pyridoxal 5'-phosphate + L-glutamate + phosphate + 3 H2O + H(+). It carries out the reaction L-glutamine + H2O = L-glutamate + NH4(+). The protein operates within cofactor biosynthesis; pyridoxal 5'-phosphate biosynthesis. In terms of biological role, catalyzes the hydrolysis of glutamine to glutamate and ammonia as part of the biosynthesis of pyridoxal 5'-phosphate. The resulting ammonia molecule is channeled to the active site of PdxS. The chain is Pyridoxal 5'-phosphate synthase subunit PdxT from Paenarthrobacter aurescens (strain TC1).